Consider the following 211-residue polypeptide: NADH-quinone oxidoreductase subunit I (211 aa).

The disordered stretch occupies residues 1-27; sequence MANTDRPALPHKRAVPPSRADSGPRRR. 4Fe-4S ferredoxin-type domains lie at 71–101 and 117–146; these read LNRYPDGLEKCIGCELCAWACPADAIYVEGA and RVYQINYLRCIGCGLCIEACPTRALTMTYD. 8 residues coordinate [4Fe-4S] cluster: Cys81, Cys84, Cys87, Cys91, Cys126, Cys129, Cys132, and Cys136.

The protein belongs to the complex I 23 kDa subunit family. In terms of assembly, NDH-1 is composed of 14 different subunits. Subunits NuoA, H, J, K, L, M, N constitute the membrane sector of the complex. [4Fe-4S] cluster serves as cofactor.

It is found in the cell membrane. The enzyme catalyses a quinone + NADH + 5 H(+)(in) = a quinol + NAD(+) + 4 H(+)(out). In terms of biological role, NDH-1 shuttles electrons from NADH, via FMN and iron-sulfur (Fe-S) centers, to quinones in the respiratory chain. The immediate electron acceptor for the enzyme in this species is believed to be menaquinone. Couples the redox reaction to proton translocation (for every two electrons transferred, four hydrogen ions are translocated across the cytoplasmic membrane), and thus conserves the redox energy in a proton gradient. The chain is NADH-quinone oxidoreductase subunit I from Mycobacterium tuberculosis (strain ATCC 25177 / H37Ra).